The chain runs to 204 residues: Recombination protein RecR (204 aa).

A C4-type zinc finger spans residues 58-75; the sequence is CSICQNVTDRGDDPCSIC. The region spanning 83–181 is the Toprim domain; that stretch reads SKICVVESPP…EVTKIARGIP (99 aa).

The protein belongs to the RecR family.

May play a role in DNA repair. It seems to be involved in an RecBC-independent recombinational process of DNA repair. It may act with RecF and RecO. This is Recombination protein RecR from Chlorobium phaeobacteroides (strain BS1).